Consider the following 30-residue polypeptide: Thylakoid lumenal 17 kDa protein (30 aa).

Its subcellular location is the plastid. It localises to the chloroplast thylakoid lumen. This chain is Thylakoid lumenal 17 kDa protein, found in Spinacia oleracea (Spinach).